The primary structure comprises 122 residues: Ribonuclease P protein component (122 aa).

Belongs to the RnpA family. As to quaternary structure, consists of a catalytic RNA component (M1 or rnpB) and a protein subunit.

The catalysed reaction is Endonucleolytic cleavage of RNA, removing 5'-extranucleotides from tRNA precursor.. Functionally, RNaseP catalyzes the removal of the 5'-leader sequence from pre-tRNA to produce the mature 5'-terminus. It can also cleave other RNA substrates such as 4.5S RNA. The protein component plays an auxiliary but essential role in vivo by binding to the 5'-leader sequence and broadening the substrate specificity of the ribozyme. This chain is Ribonuclease P protein component, found in Lactobacillus johnsonii (strain CNCM I-12250 / La1 / NCC 533).